The sequence spans 484 residues: PTS system N-acetylmuramic acid-specific EIIBC component (484 aa).

One can recognise a PTS EIIB type-1 domain in the interval 1–89 (MAKITSNTVS…NQLIDSLTSG (89 aa)). The active-site Phosphocysteine intermediate; for EIIB activity is C28. One can recognise a PTS EIIC type-1 domain in the interval 125–484 (SKFATIFTPL…FFGCKDVDLS (360 aa)). A run of 10 helical transmembrane segments spans residues 127–147 (FATIFTPLIPGFIAAGLLLGF), 168–188 (LIAYMKVFGKGLFAFLSILIG), 194–214 (AFGGSGVNGAILASLFVLGYN), 228–248 (FFGFAIDPRGNIIGVLLAAII), 266–286 (MILTSVITLLIMGAVTFLIIM), 310–330 (AAILAGLFLISVVFGIHQGFV), 345–365 (LFPILAMAGGGQVGASMALYF), 379–399 (GAIIPGLLGIGEPLIYGVTLP), 409–429 (IGGAAGGFFIGLVSYLGLPVG), and 451–471 (IFPGMMVFVAGLLISYIVGFL).

The protein resides in the cell inner membrane. It catalyses the reaction N-acetyl-beta-D-muramate(out) + N(pros)-phospho-L-histidyl-[protein] = N-acetyl-beta-D-muramate 6-phosphate(in) + L-histidyl-[protein]. Functionally, the phosphoenolpyruvate-dependent sugar phosphotransferase system (sugar PTS), a major carbohydrate active transport system, catalyzes the phosphorylation of incoming sugar substrates concomitantly with their translocation across the cell membrane. This system is involved in N-acetylmuramic acid (MurNAc) transport, yielding cytoplasmic MurNAc-6-P. Is also able to take up anhydro-N-acetylmuramic acid (anhMurNAc), but cannot phosphorylate the carbon 6, probably because of the 1,6-anhydro ring. The sequence is that of PTS system N-acetylmuramic acid-specific EIIBC component (murP) from Vibrio parahaemolyticus serotype O3:K6 (strain RIMD 2210633).